The following is a 148-amino-acid chain: Isotocin-neurophysin IT 2 (148 aa).

The signal sequence occupies residues 1–20 (MSGSMSSVFSLLYLLSVCSA). A disulfide bridge connects residues cysteine 21 and cysteine 26. Glycine 29 carries the post-translational modification Glycine amide. Disulfide bonds link cysteine 42/cysteine 86, cysteine 45/cysteine 59, cysteine 53/cysteine 76, cysteine 60/cysteine 66, cysteine 93/cysteine 105, cysteine 99/cysteine 117, and cysteine 106/cysteine 111.

Belongs to the vasopressin/oxytocin family.

Isotocin causes contraction of smooth muscles. This chain is Isotocin-neurophysin IT 2, found in Catostomus commersonii (White sucker).